The primary structure comprises 707 residues: DNA ligase (707 aa).

NAD(+) is bound by residues 36–40, 85–86, and Glu-116; these read DADFD and SL. Lys-118 acts as the N6-AMP-lysine intermediate in catalysis. 4 residues coordinate NAD(+): Arg-139, Glu-180, Lys-298, and Lys-322. Residues Cys-416, Cys-419, Cys-434, and Cys-440 each coordinate Zn(2+). Positions 613–707 constitute a BRCT domain; the sequence is AASSKIAGRS…STHVDPERMV (95 aa).

The protein belongs to the NAD-dependent DNA ligase family. LigA subfamily. The cofactor is Mg(2+). It depends on Mn(2+) as a cofactor.

It catalyses the reaction NAD(+) + (deoxyribonucleotide)n-3'-hydroxyl + 5'-phospho-(deoxyribonucleotide)m = (deoxyribonucleotide)n+m + AMP + beta-nicotinamide D-nucleotide.. In terms of biological role, DNA ligase that catalyzes the formation of phosphodiester linkages between 5'-phosphoryl and 3'-hydroxyl groups in double-stranded DNA using NAD as a coenzyme and as the energy source for the reaction. It is essential for DNA replication and repair of damaged DNA. In Nitrosospira multiformis (strain ATCC 25196 / NCIMB 11849 / C 71), this protein is DNA ligase.